Here is a 138-residue protein sequence, read N- to C-terminus: Acidic phospholipase A2 1 (138 aa).

An N-terminal signal peptide occupies residues 1–16; the sequence is MRTLWIMAVLLVGVDG. 7 cysteine pairs are disulfide-bonded: C42/C131, C44/C60, C59/C110, C65/C138, C66/C103, C73/C97, and C91/C101. Ca(2+) contacts are provided by Y43, G45, and G47. H63 is a catalytic residue. Ca(2+) is bound at residue D64. D104 is a catalytic residue.

Belongs to the phospholipase A2 family. Group II subfamily. D49 sub-subfamily. As to quaternary structure, homodimer. The cofactor is Ca(2+). Expressed by the venom gland.

The protein localises to the secreted. It catalyses the reaction a 1,2-diacyl-sn-glycero-3-phosphocholine + H2O = a 1-acyl-sn-glycero-3-phosphocholine + a fatty acid + H(+). In terms of biological role, snake venom phospholipase A2 (PLA2) that is highly lipolytic and myolytic. PLA2 catalyzes the calcium-dependent hydrolysis of the 2-acyl groups in 3-sn-phosphoglycerides. The polypeptide is Acidic phospholipase A2 1 (Protobothrops flavoviridis (Habu)).